We begin with the raw amino-acid sequence, 91 residues long: Small ribosomal subunit protein bS16 (91 aa).

It belongs to the bacterial ribosomal protein bS16 family.

The protein is Small ribosomal subunit protein bS16 of Staphylococcus epidermidis (strain ATCC 35984 / DSM 28319 / BCRC 17069 / CCUG 31568 / BM 3577 / RP62A).